Consider the following 389-residue polypeptide: MNTHEFQAKQILRKYGIPVPDFYIASSSKEVEEIIKQYQLQSAIIKVQVHAGGRGKAGGVKLATNPQEILEFSQELIGKKIINEQTGPSGMISHQVLISPAILIKKEFYLGITINRELASRVLIASPIGGVNIEKIAHEQPNQLLMLPIPLEETFRSYHLIRIASFMGWKGKQIQEGVAIIQSLVKAFKETDASLLEINPLVETKEGHLLALDAKLSIDDNALFKHEDLKTLFDPSQMSNNEARAQQFELAYVALEGEIGCMVNGAGLAMATMDLIQYHGGRPANFLDVGGGASQVKVAEGFRIILSDSNVKAILINIFGGIMNCETLASGIIEAAKGLQIHIPLIVRMEGTNVEKGKQLLQQSGLKILITENLTEAAQQAVQLAQSVR.

Positions 9–244 constitute an ATP-grasp domain; sequence KQILRKYGIP…PSQMSNNEAR (236 aa). ATP is bound by residues Lys46, 53–55, Ile102, and Glu107; that span reads GRG. 2 residues coordinate Mg(2+): Asn199 and Asp213. Residues Asn264 and 321-323 contribute to the substrate site; that span reads GIM.

The protein belongs to the succinate/malate CoA ligase beta subunit family. As to quaternary structure, heterotetramer of two alpha and two beta subunits. Mg(2+) serves as cofactor.

It catalyses the reaction succinate + ATP + CoA = succinyl-CoA + ADP + phosphate. It carries out the reaction GTP + succinate + CoA = succinyl-CoA + GDP + phosphate. Its pathway is carbohydrate metabolism; tricarboxylic acid cycle; succinate from succinyl-CoA (ligase route): step 1/1. In terms of biological role, succinyl-CoA synthetase functions in the citric acid cycle (TCA), coupling the hydrolysis of succinyl-CoA to the synthesis of either ATP or GTP and thus represents the only step of substrate-level phosphorylation in the TCA. The beta subunit provides nucleotide specificity of the enzyme and binds the substrate succinate, while the binding sites for coenzyme A and phosphate are found in the alpha subunit. In Protochlamydia amoebophila (strain UWE25), this protein is Succinate--CoA ligase [ADP-forming] subunit beta.